Here is a 712-residue protein sequence, read N- to C-terminus: MSNPAVASEHYINRELSWISFNERVLAQALDTRTPLLEQAKFSAIFSNNLDEFFMVRVASLKAQVEAGITKTSADGLTPLQQLLTIRDHLVPLIEQQQDHYRKHLKNQLVEHGVHLLDYEQLNPKERLWIDNYFQTAIFPVLTPLAVDQAHPFPFVSNLSLNIATLILDPETGQQQFARVKIPQKTIPRFVEIPPDLSGINPKPVHTAVPLEQVVAFNLKLLFPGMKIEEHYFFRVTRDADLELRDLEADDLMSAMEQGLHKRRMGGEVVRLEVTNEMPQRVVEMLIEGMAVEEKDLYRIEGLLGLDDLFGLMRLPLEQLKDQPHIGLTAKVLSRSQRRMLEDESIKEEEFKSIFSVIRRKDILLHHPYELFATSVEEFINQAADDPLVMGIKITLYRTSKDSPIIAALIRAAEHGKQVMALVELKARFDEGNNIQWARHLERSGVHVVYGVLGLKTHTKTILVVRKEKERLRSYVHIGTGNYNSKTSRLYTDLGLLSARPELSQDLVELFNYLTGFSKQQSFRRLLVAPVTLRKGMESLILREIEHAREGRGGHIRAKMNALVDPAIISLLYEASQVGVRIELIIRGMCCLYPGRKGFSENISVISIIGRFLEHSRIFWFANDNNPEVYIGSADLMPRNLDRRVEAITPIEEPEQKEHLERLLNLYLNDNREAWDMQSDGSFLQRQPNPNSEEHRAQQQLINLWQQGIPAA.

N49 contributes to the ATP binding site. Mg(2+) is bound by residues R398 and R428. H458 acts as the Phosphohistidine intermediate in catalysis. ATP-binding residues include Y491, R587, and H615.

It belongs to the polyphosphate kinase 1 (PPK1) family. It depends on Mg(2+) as a cofactor. Post-translationally, an intermediate of this reaction is the autophosphorylated ppk in which a phosphate is covalently linked to a histidine residue through a N-P bond.

The catalysed reaction is [phosphate](n) + ATP = [phosphate](n+1) + ADP. Its function is as follows. Catalyzes the reversible transfer of the terminal phosphate of ATP to form a long-chain polyphosphate (polyP). In Prochlorococcus marinus (strain MIT 9313), this protein is Polyphosphate kinase.